We begin with the raw amino-acid sequence, 373 residues long: L-threonine 3-dehydrogenase, mitochondrial (373 aa).

NAD(+)-binding positions include 62–67, 88–90, 106–107, Tyr195, Lys199, and Ile225; these read GGLGQL, DIR, and NI. The active-site Proton donor/acceptor is Tyr195.

Belongs to the NAD(P)-dependent epimerase/dehydratase family. Homodimer.

Its subcellular location is the mitochondrion. The enzyme catalyses L-threonine + NAD(+) = (2S)-2-amino-3-oxobutanoate + NADH + H(+). It functions in the pathway amino-acid degradation; L-threonine degradation via oxydo-reductase pathway; glycine from L-threonine: step 1/2. In terms of biological role, catalyzes the NAD(+)-dependent oxidation of L-threonine to 2-amino-3-ketobutyrate, mediating L-threonine catabolism. This chain is L-threonine 3-dehydrogenase, mitochondrial, found in Mus musculus (Mouse).